A 452-amino-acid chain; its full sequence is NADH-ubiquinone oxidoreductase chain 4 (452 aa).

14 helical membrane passes run 7-27, 57-77, 95-115, 116-136, 145-165, 186-206, 218-238, 251-271, 278-298, 303-323, 336-356, 360-380, 386-406, and 428-448; these read VLMS…IIAL, MMSF…ILAS, VILL…MFYI, WFEA…YQPE, MIYT…IFIV, MALA…MFTV, PIAG…YGIL, TSSL…LICL, SLIA…ALMS, FQAA…LFVM, LFLM…WFLF, NMAA…TSIL, AFIL…YMYT, and LTLM…PELI.

This sequence belongs to the complex I subunit 4 family.

It is found in the mitochondrion membrane. The enzyme catalyses a ubiquinone + NADH + 5 H(+)(in) = a ubiquinol + NAD(+) + 4 H(+)(out). In terms of biological role, core subunit of the mitochondrial membrane respiratory chain NADH dehydrogenase (Complex I) that is believed to belong to the minimal assembly required for catalysis. Complex I functions in the transfer of electrons from NADH to the respiratory chain. The immediate electron acceptor for the enzyme is believed to be ubiquinone. The chain is NADH-ubiquinone oxidoreductase chain 4 (ND4) from Lumbricus terrestris (Common earthworm).